A 232-amino-acid polypeptide reads, in one-letter code: Ribonuclease 3 (232 aa).

The region spanning 9–131 (INLLQKKLGY…IIGGIFLDSN (123 aa)) is the RNase III domain. Residue E44 participates in Mg(2+) binding. D48 is a catalytic residue. 2 residues coordinate Mg(2+): D117 and E120. The active site involves E120. Residues 158–228 (DPKTRLQEYL…AENALKFLIE (71 aa)) form the DRBM domain.

This sequence belongs to the ribonuclease III family. Homodimer. Requires Mg(2+) as cofactor.

It is found in the cytoplasm. It catalyses the reaction Endonucleolytic cleavage to 5'-phosphomonoester.. Its function is as follows. Digests double-stranded RNA. Involved in the processing of primary rRNA transcript to yield the immediate precursors to the large and small rRNAs (23S and 16S). Processes some mRNAs, and tRNAs when they are encoded in the rRNA operon. Processes pre-crRNA and tracrRNA of type II CRISPR loci if present in the organism. This chain is Ribonuclease 3, found in Blochmanniella floridana.